We begin with the raw amino-acid sequence, 728 residues long: MRSLKLILASASVVSATCPYMSGEMPNSQNGPLDRRHDTLSDPTDQFLSKFYIDDEQSVLTTDVGGPIEDQHSLKAGNRGPTLLEDFIFRQKIQHFDHERVPERAVHARGAGAHGVFTSYNNWSNITAASFLNAAGKQTPVFVRFSTVAGSRGSVDSARDIHGFATRLYTDEGNFDIVGNNVPVFFIQDAIQFPDLIHAVKPQPDSEIPQAATAHDTAWDFFSQQPSSLHALFWAMSGHGIPRSMRHVDGWGVHTFRLVTDEGNSTLVKFRWKTLQGRAGLVWEEAQALGGKNPDFHRQDLWDAIESGRYPEWELGFQLVNEADQSKFDFDLLDPTKIIPEELVPFTPIGKMVLNRNPKNYFAETEQIMFQPGHVVRGIDFTDDPLLQGRLYSYLDTQLNRHGGPNFEQLPINRPRIPFHNNNRDGAGQMFIPLNTAAYTPNSMSNGFPQQANRTHNRGFFTAPGRMVNGPLVRELSPSFNDVWSQPRLFYNSLTVFEKQFLVNAMRFENSHVRSETVRKNVIIQLNRVDNDLARRVALAIGVEPPSPDPTFYHNKTTVPIGTFGTNLLRLDGLKIALLTRDDGSFTIAEQLRAAFNSANNKVDIVLVGSSLDPQRGVNMTYSGADGSIFDAVIVVGGLLTSASTQYPRGRPLRIITDAYAYGKPVGAVGDGSNEALRDVLMAAGGDASNGLDQPGVYISNDVSEAYVRSVLDGLTAYRFLNRFPLDR.

Residues His107 and Asn180 contribute to the active site. A heme-binding site is contributed by Tyr394.

This sequence belongs to the catalase family. Requires heme as cofactor.

Its subcellular location is the secreted. The catalysed reaction is 2 H2O2 = O2 + 2 H2O. In terms of biological role, occurs in almost all aerobically respiring organisms and serves to protect cells from the toxic effects of hydrogen peroxide. This Ajellomyces capsulatus (Darling's disease fungus) protein is Catalase B (CATB).